The following is a 135-amino-acid chain: Large ribosomal subunit protein uL16c (135 aa).

The protein belongs to the universal ribosomal protein uL16 family. Part of the 50S ribosomal subunit.

It localises to the plastid. The protein localises to the chloroplast. This chain is Large ribosomal subunit protein uL16c, found in Acorus calamus var. americanus (American sweet flag).